Reading from the N-terminus, the 281-residue chain is Survival motor neuron protein 1 (281 aa).

2 disordered regions span residues 1–20 (MANGAEDVVFCRGTGQSDDS) and 42–77 (ALKGEDGATPQENDNPGKKRKNNKKNKSRKRCNAAP). Thr14 bears the Phosphothreonine mark. Ser17 and Ser20 each carry phosphoserine. The span at 59–73 (KKRKNNKKNKSRKRC) shows a compositional bias: basic residues. In terms of domain architecture, Tudor spans 80 to 140 (EWQVGDSCYA…LTEPPDMDED (61 aa)). Positions 145 to 159 (ANVKETESSTEESDR) are enriched in basic and acidic residues. The interval 145-242 (ANVKETESST…PMSPDFGEDD (98 aa)) is disordered. 2 stretches are compositionally biased toward pro residues: residues 179–197 (MGPPSWFPSFPPGPPPPPP) and 212–235 (PSFPGWPPMIPLGPPMIPPPPPMS). The segment at 225–252 (PPMIPPPPPMSPDFGEDDEALGSMLISW) is P2 (binding site for SNRPB). The interval 264–279 (GLRQGRKEAAASKKSH) is required for interaction with SYNCRIP.

It belongs to the SMN family. As to quaternary structure, homodimer. Component of an import snRNP complex composed of kpnb1, rnut1, smn1 and znf259. Part of the core SMN complex that contains smn1, gemin2/sip1, ddx20/gemin3, gemin4, gemin5, gemin6, gemin7, gemin8 and strap/unrip. Interacts with ddx20, fbl, nola1, rnut1, syncrip and with several spliceosomal snRNP core Sm proteins, including snrpb, snrpd1, snrpd2, snrpd3, snrpe and ilf3. Interacts with elavl4.

It localises to the nucleus. The protein resides in the gem. Its subcellular location is the cajal body. It is found in the cytoplasm. The protein localises to the cytoplasmic granule. It localises to the perikaryon. The protein resides in the cell projection. Its subcellular location is the neuron projection. It is found in the myofibril. The protein localises to the sarcomere. It localises to the z line. In terms of biological role, the SMN complex plays an essential role in spliceosomal snRNP assembly in the cytoplasm and is required for pre-mRNA splicing in the nucleus. It may also play a role in the metabolism of snoRNPs. Required in motor neurons and proprioceptive neurons to ensure correct U12 intron splicing and proper levels of tmem41b mRNA. Required for the maturation of motor neuron axonal branches and dendrites. The polypeptide is Survival motor neuron protein 1 (smn1) (Danio rerio (Zebrafish)).